Here is a 406-residue protein sequence, read N- to C-terminus: Imidazolonepropionase (406 aa).

His72 and His74 together coordinate Fe(3+). The Zn(2+) site is built by His72 and His74. Residues Arg81, Tyr144, and His177 each coordinate 4-imidazolone-5-propanoate. Tyr144 contributes to the N-formimidoyl-L-glutamate binding site. His242 contributes to the Fe(3+) binding site. His242 serves as a coordination point for Zn(2+). Residue Gln245 coordinates 4-imidazolone-5-propanoate. Asp317 lines the Fe(3+) pocket. Asp317 is a binding site for Zn(2+). N-formimidoyl-L-glutamate-binding residues include Asn319 and Gly321. Thr322 lines the 4-imidazolone-5-propanoate pocket.

The protein belongs to the metallo-dependent hydrolases superfamily. HutI family. The cofactor is Zn(2+). Requires Fe(3+) as cofactor.

Its subcellular location is the cytoplasm. The catalysed reaction is 4-imidazolone-5-propanoate + H2O = N-formimidoyl-L-glutamate. The protein operates within amino-acid degradation; L-histidine degradation into L-glutamate; N-formimidoyl-L-glutamate from L-histidine: step 3/3. Its function is as follows. Catalyzes the hydrolytic cleavage of the carbon-nitrogen bond in imidazolone-5-propanoate to yield N-formimidoyl-L-glutamate. It is the third step in the universal histidine degradation pathway. This chain is Imidazolonepropionase, found in Yersinia pseudotuberculosis serotype O:1b (strain IP 31758).